An 82-amino-acid polypeptide reads, in one-letter code: RNA-binding protein Hfq (82 aa).

Positions Asp10–Ile70 constitute a Sm domain.

Belongs to the Hfq family. Homohexamer.

Its function is as follows. RNA chaperone that binds small regulatory RNA (sRNAs) and mRNAs to facilitate mRNA translational regulation in response to envelope stress, environmental stress and changes in metabolite concentrations. Also binds with high specificity to tRNAs. The chain is RNA-binding protein Hfq from Syntrophomonas wolfei subsp. wolfei (strain DSM 2245B / Goettingen).